A 302-amino-acid chain; its full sequence is DNA-directed RNA polymerase II subunit rpb3 (302 aa).

This sequence belongs to the archaeal Rpo3/eukaryotic RPB3 RNA polymerase subunit family. In terms of assembly, component of the RNA polymerase II (Pol II) complex consisting of 12 subunits.

The protein localises to the nucleus. In terms of biological role, DNA-dependent RNA polymerase catalyzes the transcription of DNA into RNA using the four ribonucleoside triphosphates as substrates. Component of RNA polymerase II which synthesizes mRNA precursors and many functional non-coding RNAs. Pol II is the central component of the basal RNA polymerase II transcription machinery. It is composed of mobile elements that move relative to each other. Rpb3 is part of the core element with the central large cleft and the clamp element that moves to open and close the cleft. The protein is DNA-directed RNA polymerase II subunit rpb3 (polr2c) of Dictyostelium discoideum (Social amoeba).